We begin with the raw amino-acid sequence, 489 residues long: 3-octaprenyl-4-hydroxybenzoate carboxy-lyase (489 aa).

Asparagine 172 is a Mn(2+) binding site. Residues 175–177 (IYR), 189–191 (RWL), and 194–195 (RG) each bind prenylated FMN. Glutamate 238 contributes to the Mn(2+) binding site. Aspartate 287 serves as the catalytic Proton donor.

Belongs to the UbiD family. As to quaternary structure, homohexamer. It depends on prenylated FMN as a cofactor. The cofactor is Mn(2+).

The protein localises to the cell membrane. It carries out the reaction a 4-hydroxy-3-(all-trans-polyprenyl)benzoate + H(+) = a 2-(all-trans-polyprenyl)phenol + CO2. It participates in cofactor biosynthesis; ubiquinone biosynthesis. Catalyzes the decarboxylation of 3-octaprenyl-4-hydroxy benzoate to 2-octaprenylphenol, an intermediate step in ubiquinone biosynthesis. This Psychromonas ingrahamii (strain DSM 17664 / CCUG 51855 / 37) protein is 3-octaprenyl-4-hydroxybenzoate carboxy-lyase.